A 97-amino-acid polypeptide reads, in one-letter code: Large ribosomal subunit protein eL37 (97 aa).

Residue K10 is modified to N6-acetyllysine. Residues C19, C22, C34, and C37 each coordinate Zn(2+). The segment at 19-37 adopts a C4-type zinc-finger fold; sequence CRRCGSKAYHLQKSTCGKC. A phosphoserine mark is found at S96 and S97.

It belongs to the eukaryotic ribosomal protein eL37 family. As to quaternary structure, component of the large ribosomal subunit.

It localises to the cytoplasm. Component of the large ribosomal subunit. The ribosome is a large ribonucleoprotein complex responsible for the synthesis of proteins in the cell. This is Large ribosomal subunit protein eL37 (RPL37) from Bos taurus (Bovine).